The sequence spans 362 residues: Histidinol-phosphate aminotransferase 1 (362 aa).

Residue Lys-226 is modified to N6-(pyridoxal phosphate)lysine.

This sequence belongs to the class-II pyridoxal-phosphate-dependent aminotransferase family. Histidinol-phosphate aminotransferase subfamily. As to quaternary structure, homodimer. Pyridoxal 5'-phosphate is required as a cofactor.

The enzyme catalyses L-histidinol phosphate + 2-oxoglutarate = 3-(imidazol-4-yl)-2-oxopropyl phosphate + L-glutamate. It participates in amino-acid biosynthesis; L-histidine biosynthesis; L-histidine from 5-phospho-alpha-D-ribose 1-diphosphate: step 7/9. The polypeptide is Histidinol-phosphate aminotransferase 1 (Dechloromonas aromatica (strain RCB)).